A 215-amino-acid polypeptide reads, in one-letter code: MOB kinase activator-like 1A (215 aa).

Residues 1–29 (MSLFGLGSRNQKTFRPKKSAPTGSKGAQL) are disordered. Positions 80, 85, 162, and 167 each coordinate Zn(2+).

This sequence belongs to the MOB1/phocein family. As to expression, isoform 1 is constitutively expressed. Isoform 2 is specifically expressed in flowers bud during sporogenesis and gametogenesis.

It is found in the cytoplasm. It localises to the cytoskeleton. The protein resides in the phragmoplast. The polypeptide is MOB kinase activator-like 1A (Medicago sativa subsp. falcata (Sickle medic)).